An 82-amino-acid chain; its full sequence is Small ribosomal subunit protein bS18 (82 aa).

The disordered stretch occupies residues 1-25 (MKRNNMKRARMEQSRRPKKNPLKAE).

Belongs to the bacterial ribosomal protein bS18 family. As to quaternary structure, part of the 30S ribosomal subunit. Forms a tight heterodimer with protein bS6.

Functionally, binds as a heterodimer with protein bS6 to the central domain of the 16S rRNA, where it helps stabilize the platform of the 30S subunit. The chain is Small ribosomal subunit protein bS18 from Corynebacterium urealyticum (strain ATCC 43042 / DSM 7109).